The sequence spans 660 residues: Bifunctional polymyxin resistance protein ArnA (660 aa).

Positions 1-304 are formyltransferase ArnAFT; the sequence is MKTVVFAYHD…TLGLVQGSRL (304 aa). 86–88 provides a ligand contact to (6R)-10-formyltetrahydrofolate; the sequence is HLI. The Proton donor; for formyltransferase activity role is filled by His-104. (6R)-10-formyltetrahydrofolate-binding positions include Arg-114 and 136–140; that span reads VKRAD. The tract at residues 314-660 is dehydrogenase ArnADH; sequence RRTRVLILGV…RTVDLTDKPS (347 aa). NAD(+)-binding positions include Asp-347 and 368–369; that span reads DI. UDP-alpha-D-glucuronate contacts are provided by residues Ala-393, Tyr-398, and 432 to 433; that span reads TS. The active-site Proton acceptor; for decarboxylase activity is the Glu-434. UDP-alpha-D-glucuronate-binding positions include Arg-460, Asn-492, 526 to 535, and Tyr-613; that span reads KLIDGGKQKR. Arg-619 (proton donor; for decarboxylase activity) is an active-site residue.

The protein in the N-terminal section; belongs to the Fmt family. UDP-L-Ara4N formyltransferase subfamily. This sequence in the C-terminal section; belongs to the NAD(P)-dependent epimerase/dehydratase family. UDP-glucuronic acid decarboxylase subfamily. Homohexamer, formed by a dimer of trimers.

It catalyses the reaction UDP-alpha-D-glucuronate + NAD(+) = UDP-beta-L-threo-pentopyranos-4-ulose + CO2 + NADH. It carries out the reaction UDP-4-amino-4-deoxy-beta-L-arabinose + (6R)-10-formyltetrahydrofolate = UDP-4-deoxy-4-formamido-beta-L-arabinose + (6S)-5,6,7,8-tetrahydrofolate + H(+). Its pathway is nucleotide-sugar biosynthesis; UDP-4-deoxy-4-formamido-beta-L-arabinose biosynthesis; UDP-4-deoxy-4-formamido-beta-L-arabinose from UDP-alpha-D-glucuronate: step 1/3. It participates in nucleotide-sugar biosynthesis; UDP-4-deoxy-4-formamido-beta-L-arabinose biosynthesis; UDP-4-deoxy-4-formamido-beta-L-arabinose from UDP-alpha-D-glucuronate: step 3/3. It functions in the pathway bacterial outer membrane biogenesis; lipopolysaccharide biosynthesis. Its function is as follows. Bifunctional enzyme that catalyzes the oxidative decarboxylation of UDP-glucuronic acid (UDP-GlcUA) to UDP-4-keto-arabinose (UDP-Ara4O) and the addition of a formyl group to UDP-4-amino-4-deoxy-L-arabinose (UDP-L-Ara4N) to form UDP-L-4-formamido-arabinose (UDP-L-Ara4FN). The modified arabinose is attached to lipid A and is required for resistance to polymyxin and cationic antimicrobial peptides. The protein is Bifunctional polymyxin resistance protein ArnA of Escherichia coli O1:K1 / APEC.